The primary structure comprises 114 residues: Iron-sulfur cluster assembly protein CyaY (114 aa).

Belongs to the frataxin family.

Its function is as follows. Involved in iron-sulfur (Fe-S) cluster assembly. May act as a regulator of Fe-S biogenesis. This is Iron-sulfur cluster assembly protein CyaY from Ralstonia pickettii (strain 12J).